A 734-amino-acid chain; its full sequence is Myb-like protein J (734 aa).

Disordered stretches follow at residues 1–35 (MPNN…FKSN), 128–196 (QKDQ…PTMM), and 221–378 (SPIS…LKQG). The span at 131 to 142 (QQQKEQQKEQQK) shows a compositional bias: basic and acidic residues. Residues 164-173 (TTTTTTTTTT) show a composition bias toward low complexity. A compositionally biased stretch (polar residues) spans 174-196 (AVEQQGAEQQDTNLNSTSSPTMM). Low complexity predominate over residues 221-230 (SPISSSLNNS). Polar residues predominate over residues 231 to 257 (QDNTKPVSPDNIENTSNPMDTSSSNGK). The segment covering 258-372 (TPTITPIVTP…GGKTNPTGKK (115 aa)) has biased composition (low complexity). In terms of domain architecture, HTH myb-type spans 371–426 (KKTSLKQGWTKEEHIRFLNGIQIHGKGAWKEIAQFVGTRTPTQIQSHAQKYYLRQK). The H-T-H motif DNA-binding region spans 399–422 (WKEIAQFVGTRTPTQIQSHAQKYY). Residues 445–454 (DDNLNNSNKN) show a composition bias toward low complexity. The disordered stretch occupies residues 445-623 (DDNLNNSNKN…GNILRHQNSH (179 aa)). Residues 455–468 (NVDKNKQDDKEKKT) are compositionally biased toward basic and acidic residues. The segment covering 469-478 (QKTKKTKSKS) has biased composition (basic residues). Low complexity-rich tracts occupy residues 489–543 (QQQQ…SSQT) and 574–615 (NNNN…NEGN).

It localises to the nucleus. This is Myb-like protein J (mybJ) from Dictyostelium discoideum (Social amoeba).